The primary structure comprises 88 residues: KTx type I (88 aa).

The signal sequence occupies residues 1–19; it reads MKTTLVVVVLACIVALTSA. The region spanning 54–88 is the ShKT domain; that stretch reads CKDVLSEFSCGVLKKDGQCNKADIQAKCKLTCDKC. Disulfide bonds link cysteine 54/cysteine 88, cysteine 63/cysteine 81, and cysteine 72/cysteine 85.

Belongs to the sea anemone type 1 potassium channel toxin family. In terms of tissue distribution, expressed both outside and in acontia, a specialised envenomation structure laden with batteries of venom-containing nematocysts found only in the superfamily Metridioidea.

The protein localises to the secreted. It is found in the nematocyst. Inhibits voltage-gated potassium channels (Kv1/KCNA). This is KTx type I from Calliactis polypus (Hermit crab anemone).